We begin with the raw amino-acid sequence, 1342 residues long: DNA-directed RNA polymerase subunit beta (1342 aa).

Belongs to the RNA polymerase beta chain family. In terms of assembly, the RNAP catalytic core consists of 2 alpha, 1 beta, 1 beta' and 1 omega subunit. When a sigma factor is associated with the core the holoenzyme is formed, which can initiate transcription.

It carries out the reaction RNA(n) + a ribonucleoside 5'-triphosphate = RNA(n+1) + diphosphate. DNA-dependent RNA polymerase catalyzes the transcription of DNA into RNA using the four ribonucleoside triphosphates as substrates. In Pectobacterium carotovorum subsp. carotovorum (strain PC1), this protein is DNA-directed RNA polymerase subunit beta.